A 340-amino-acid polypeptide reads, in one-letter code: Cell growth-regulated gene 1 protein (340 aa).

This sequence belongs to the SMP-30/CGR1 family.

Functionally, involved in the cell growth regulation. This is Cell growth-regulated gene 1 protein (CGR1) from Candida albicans (strain SC5314 / ATCC MYA-2876) (Yeast).